The chain runs to 169 residues: uncharacterized protein (169 aa).

The helical transmembrane segment at 10 to 30 (YFVTILIIIIIILIVLLIVFL) threads the bilayer. Residues 98–123 (QSKPINKNNQQTKNTPTPLDDRPDLS) are disordered. A compositionally biased stretch (low complexity) spans 100–115 (KPINKNNQQTKNTPTP).

It localises to the membrane. This is an uncharacterized protein from Acanthamoeba polyphaga (Amoeba).